A 272-amino-acid chain; its full sequence is MKTVSQLIDMKQKETKISMVTAYDFPSAKQVEAAGIDMILVGDSLGMTVLGYESTVQVTLADMIHHGRAVRRGAPNTFVVVDMPIGAVGISMTQDLNHALKLYQETNANAIKAEGAHITPFIEKATAIGIPVVAHLGLTPQSVGVMGYKLQGATKEAAEQLILDAKNVEQAGAVALVLEAIPNDLAEEISKHLTIPVIGIGAGKGTDGQVLVYHDMLNYGVEHKAKFVKQFADFSVGVDGLKQYDQEVKSGAFPSEEYTYKKKIMNEVNNND.

Mg(2+)-binding residues include Asp-43 and Asp-82. Residues Asp-43–Ser-44, Asp-82, and Lys-112 each bind 3-methyl-2-oxobutanoate. Mg(2+) is bound at residue Glu-114. The active-site Proton acceptor is Glu-179.

It belongs to the PanB family. In terms of assembly, homodecamer; pentamer of dimers. Mg(2+) is required as a cofactor.

It localises to the cytoplasm. The catalysed reaction is 3-methyl-2-oxobutanoate + (6R)-5,10-methylene-5,6,7,8-tetrahydrofolate + H2O = 2-dehydropantoate + (6S)-5,6,7,8-tetrahydrofolate. The protein operates within cofactor biosynthesis; (R)-pantothenate biosynthesis; (R)-pantoate from 3-methyl-2-oxobutanoate: step 1/2. Functionally, catalyzes the reversible reaction in which hydroxymethyl group from 5,10-methylenetetrahydrofolate is transferred onto alpha-ketoisovalerate to form ketopantoate. This chain is 3-methyl-2-oxobutanoate hydroxymethyltransferase, found in Staphylococcus aureus (strain COL).